Here is a 234-residue protein sequence, read N- to C-terminus: UPF0502 protein Bphyt_5265 (234 aa).

Belongs to the UPF0502 family.

In Paraburkholderia phytofirmans (strain DSM 17436 / LMG 22146 / PsJN) (Burkholderia phytofirmans), this protein is UPF0502 protein Bphyt_5265.